A 543-amino-acid chain; its full sequence is CTP synthase (543 aa).

The interval 1 to 267 (MAKFVFVTGG…CREVLDVLNL (267 aa)) is amidoligase domain. Position 13 (Ser-13) interacts with CTP. Ser-13 serves as a coordination point for UTP. Position 14-19 (14-19 (SIGKGI)) interacts with ATP. Tyr-54 serves as a coordination point for L-glutamine. Asp-71 lines the ATP pocket. Residues Asp-71 and Glu-141 each coordinate Mg(2+). CTP is bound by residues 148 to 150 (DIE), 188 to 193 (KTKPTQ), and Lys-224. UTP is bound by residues 188–193 (KTKPTQ) and Lys-224. The region spanning 292–534 (KVALVGKYVQ…IEAAQQRLPN (243 aa)) is the Glutamine amidotransferase type-1 domain. Gly-354 provides a ligand contact to L-glutamine. The active-site Nucleophile; for glutamine hydrolysis is Cys-381. Residues 382-385 (LGMQ), Glu-405, and Arg-462 each bind L-glutamine. Active-site residues include His-507 and Glu-509.

This sequence belongs to the CTP synthase family. Homotetramer.

It catalyses the reaction UTP + L-glutamine + ATP + H2O = CTP + L-glutamate + ADP + phosphate + 2 H(+). The catalysed reaction is L-glutamine + H2O = L-glutamate + NH4(+). It carries out the reaction UTP + NH4(+) + ATP = CTP + ADP + phosphate + 2 H(+). The protein operates within pyrimidine metabolism; CTP biosynthesis via de novo pathway; CTP from UDP: step 2/2. Allosterically activated by GTP, when glutamine is the substrate; GTP has no effect on the reaction when ammonia is the substrate. The allosteric effector GTP functions by stabilizing the protein conformation that binds the tetrahedral intermediate(s) formed during glutamine hydrolysis. Inhibited by the product CTP, via allosteric rather than competitive inhibition. In terms of biological role, catalyzes the ATP-dependent amination of UTP to CTP with either L-glutamine or ammonia as the source of nitrogen. Regulates intracellular CTP levels through interactions with the four ribonucleotide triphosphates. The protein is CTP synthase of Synechococcus sp. (strain WH7803).